Here is an 872-residue protein sequence, read N- to C-terminus: Paladin (872 aa).

Residues 1-37 (MGTTASAAQQVPSTVPSSENVQGNGSGSSNVEDRNSL) form a disordered region. A lipid anchor (N-myristoyl glycine) is attached at Gly2. A coiled-coil region spans residues 186–210 (RRKENLHENLHDLEKGLRAENLELA).

This sequence belongs to the paladin family.

It localises to the cytoplasm. It is found in the cytosol. This is Paladin (pald1) from Xenopus tropicalis (Western clawed frog).